Here is a 317-residue protein sequence, read N- to C-terminus: Bile salt hydrolase/transferase (317 aa).

Cysteine 2 (nucleophile; acyl-thioester intermediate) is an active-site residue. Deoxycholate contacts are provided by cysteine 2 and arginine 18. Asparagine 82 provides a ligand contact to taurine.

This sequence belongs to the peptidase C59 family. Homotetramer. The tetramer consists of a dimer of dimers.

It catalyses the reaction glycocholate + H2O = cholate + glycine. It carries out the reaction glycodeoxycholate + H2O = deoxycholate + glycine. The enzyme catalyses chenodeoxycholate + glycine = glycochenodeoxycholate + H2O. The catalysed reaction is cholate + taurine = taurocholate + H2O. It catalyses the reaction taurodeoxycholate + H2O = deoxycholate + taurine. It carries out the reaction taurochenodeoxycholate + H2O = chenodeoxycholate + taurine. The enzyme catalyses an L-alpha-amino acid + cholate = an N-choloyl-L-alpha-amino acid + H2O. The catalysed reaction is an L-alpha-amino acid + taurocholate = an N-choloyl-L-alpha-amino acid + taurine. It catalyses the reaction cholate + L-alanine = L-alanocholate + H2O. It carries out the reaction taurocholate + L-alanine = L-alanocholate + taurine. The enzyme catalyses cholate + L-serine = L-serocholate + H2O. The catalysed reaction is taurocholate + L-serine = L-serocholate + taurine. It catalyses the reaction cholate + L-histidine = L-histidocholate + H2O. It carries out the reaction taurocholate + L-histidine = L-histidocholate + taurine. It participates in lipid metabolism; bile acid biosynthesis. With respect to regulation, hydrolase activity is competitively inhibited by the products cholate (CA) and deoxycholate (DCA), and by phenylacetate and 4-aminophenylacetate. Penicillin V and penicillin G show mixed inhibition. Strongly inhibited by thiol enzyme inhibitors in vitro. Functionally, possesses dual functions in bile acid metabolism. Acts as a bile salt hydrolase that catalyzes the deconjugation of glycine- and taurine-linked bile salts, which occurs naturally in the intestines of humans, releasing amino acid residues and deconjugated bile salts (bile acids). Can hydrolyze the amide bond in all six major human conjugated bile salts, namely glycocholate (GCA), glycodeoxycholate (GDCA), glycochenodeoxycholate (GCDCA), taurocholate (TCA), taurodeoxycholate (TDCA) and taurochenodeoxycholate (TCDCA). Shows a slight preference for glycine-conjugated bile acids as substrates. Also acts as an amine N-acyltransferase that conjugates a wide variety of amino acids to conjugated and non-conjugated bile acids, thus producing bacterial bile acid amidates (BBAAs) - also named microbially conjugated bile acids (MCBAs) - in the gastrointestinal tract. These BBAAs may facilitate communication between the microbiota and host through the activation of human ligand-activated transcription factors. Is totally inactive toward penicillin V. This chain is Bile salt hydrolase/transferase, found in Bifidobacterium longum.